The primary structure comprises 405 residues: L-rhamnonate dehydratase (405 aa).

2 residues coordinate substrate: histidine 33 and arginine 59. Residues aspartate 226, glutamate 252, and glutamate 280 each coordinate Mg(2+). Residue histidine 329 is the Proton acceptor of the active site. Glutamate 349 serves as a coordination point for substrate.

Belongs to the mandelate racemase/muconate lactonizing enzyme family. RhamD subfamily. Homooctamer; tetramer of dimers. Mg(2+) serves as cofactor.

It carries out the reaction L-rhamnonate = 2-dehydro-3-deoxy-L-rhamnonate + H2O. Functionally, catalyzes the dehydration of L-rhamnonate to 2-keto-3-deoxy-L-rhamnonate (KDR). This is L-rhamnonate dehydratase from Salmonella typhi.